The following is a 462-amino-acid chain: Integrator complex subunit 12 (462 aa).

The interval 42-132 (GIDSSYRPSQ…PETQSSPITV (91 aa)) is disordered. Residues 59–86 (ISSTKNISIKQEPKISSSLPSGNNNGKV) are compositionally biased toward polar residues. A Glycyl lysine isopeptide (Lys-Gly) (interchain with G-Cter in SUMO2) cross-link involves residue Lys-68. Over residues 88-124 (TTEKVKKEAEKRPADKMKSDITEGVDIPKKPRLEKPE) the composition is skewed to basic and acidic residues. Residue Ser-128 is modified to Phosphoserine. A PHD-type zinc finger spans residues 159–215 (GLACVVCRQMMVASGNQLVECQECHNLYHRDCHKPQVTDKEANDPRLVWYCARCTRQ). Residue Lys-254 forms a Glycyl lysine isopeptide (Lys-Gly) (interchain with G-Cter in SUMO2) linkage. The segment covering 301 to 328 (SSAGPSTAKLSSTTQNNTGKPATSSANQ) has biased composition (polar residues). A disordered region spans residues 301-462 (SSAGPSTAKL…KKAAQKKLKK (162 aa)). 2 stretches are compositionally biased toward low complexity: residues 347-358 (KIGSNNSTTPTV) and 382-437 (VSKV…GPTS). The segment covering 449–462 (QMVKKKAAQKKLKK) has biased composition (basic residues).

The protein belongs to the Integrator subunit 12 family. In terms of assembly, component of the Integrator complex, composed of core subunits INTS1, INTS2, INTS3, INTS4, INTS5, INTS6, INTS7, INTS8, INTS9/RC74, INTS10, INTS11/CPSF3L, INTS12, INTS13, INTS14 and INTS15. The core complex associates with protein phosphatase 2A subunits PPP2CA and PPP2R1A, to form the Integrator-PP2A (INTAC) complex. In terms of processing, dephosphorylated at Ser-128 by the PNUTS-PP1 complex, promoting RNA polymerase II transcription pause-release.

The protein localises to the nucleus. Component of the integrator complex, a multiprotein complex that terminates RNA polymerase II (Pol II) transcription in the promoter-proximal region of genes. The integrator complex provides a quality checkpoint during transcription elongation by driving premature transcription termination of transcripts that are unfavorably configured for transcriptional elongation: the complex terminates transcription by (1) catalyzing dephosphorylation of the C-terminal domain (CTD) of Pol II subunit POLR2A/RPB1 and SUPT5H/SPT5, (2) degrading the exiting nascent RNA transcript via endonuclease activity and (3) promoting the release of Pol II from bound DNA. The integrator complex is also involved in terminating the synthesis of non-coding Pol II transcripts, such as enhancer RNAs (eRNAs), small nuclear RNAs (snRNAs), telomerase RNAs and long non-coding RNAs (lncRNAs). Mediates recruitment of cytoplasmic dynein to the nuclear envelope, probably as component of the integrator complex. In Homo sapiens (Human), this protein is Integrator complex subunit 12.